The chain runs to 402 residues: GDSL esterase/lipase At1g20120 (402 aa).

The signal sequence occupies residues 1–35 (MLQDRVSGSLSSSKISRCVLFLSLFCFFLLTMHAS). Residues 41–69 (RVPNPGPSPAPEPKPCPSPGPNPAPATTK) are disordered. Over residues 44 to 64 (NPGPSPAPEPKPCPSPGPNPA) the composition is skewed to pro residues. The N-linked (GlcNAc...) asparagine glycan is linked to Asn73. Catalysis depends on Ser85, which acts as the Nucleophile. N-linked (GlcNAc...) asparagine glycans are attached at residues Asn314 and Asn367. Active-site residues include Asp375 and His378.

It belongs to the 'GDSL' lipolytic enzyme family.

It is found in the secreted. The chain is GDSL esterase/lipase At1g20120 from Arabidopsis thaliana (Mouse-ear cress).